We begin with the raw amino-acid sequence, 1379 residues long: ABC multidrug transporter MDR2 (1379 aa).

A helical membrane pass occupies residues 65–85; the sequence is IALIVIGTIAGIGAGIPFPLL. The region spanning 69–367 is the ABC transmembrane type-1 1 domain; it reads VIGTIAGIGA…MAPFMHIFAS (299 aa). The N-linked (GlcNAc...) asparagine glycan is linked to Asn-97. The next 5 helical transmembrane spans lie at 119–139, 193–213, 215–235, 301–321, and 336–356; these read VLQV…HTGC, KVGL…VAFL, VATI…MAFG, IQFG…FWQG, and VSVG…FVLS. The region spanning 403–682 is the ABC transporter 1 domain; it reads IELQDVTFNY…DGVYAGMVRL (280 aa). 438 to 445 contributes to the ATP binding site; that stretch reads GTSGSGKS. 2 N-linked (GlcNAc...) asparagine glycosylation sites follow: Asn-552 and Asn-633. Residues 738 to 758 form a disordered region; it reads YMPEEADSLPTEPENEKEKPK. The next 4 membrane-spanning stretches (helical) occupy residues 781–801, 820–840, 901–921, and 922–942; these read LGLI…VIFG, GMLF…AVIV, IGVL…SHVI, and AWRI…SGVL. In terms of domain architecture, ABC transmembrane type-1 2 spans 781–1068; sequence LGLITSIMIG…MFALVPDISK (288 aa). Asn-989 is a glycosylation site (N-linked (GlcNAc...) asparagine). 2 helical membrane passes run 1008 to 1028 and 1032 to 1052; these read FWLS…YWWG and ILAG…LLFS. The region spanning 1135 to 1374 is the ABC transporter 2 domain; it reads VQFRNVHFRY…CESYRANVIH (240 aa). 1170–1177 serves as a coordination point for ATP; it reads GPSGSGKS.

It belongs to the ABC transporter superfamily. ABCB family. Multidrug resistance exporter (TC 3.A.1.201) subfamily.

Its subcellular location is the cell membrane. Functionally, pleiotropic ABC efflux transporter that may be involved in the modulation susceptibility to a wide range of unrelated cytotoxic compounds. The chain is ABC multidrug transporter MDR2 from Trichophyton equinum (strain ATCC MYA-4606 / CBS 127.97) (Horse ringworm fungus).